Here is a 420-residue protein sequence, read N- to C-terminus: Phosphoglycerate kinase, cytosolic (420 aa).

(2R)-3-phosphoglycerate is bound by residues V23, D24, F25, N26, R39, S61, H62, G64, R65, R135, H171, and R172. G217 is a binding site for ADP. G217 lines the CDP pocket. A (2R)-3-phosphoglycerate-binding site is contributed by K219. K219 lines the AMP pocket. Position 222 (D222) interacts with CDP. D222 provides a ligand contact to Mg(2+). ADP contacts are provided by K223 and G241. K223 provides a ligand contact to AMP. K223 is an ATP binding site. G241 contacts CDP. 2 residues coordinate AMP: A242 and A314. The ATP site is built by A242 and A314. A314 and N338 together coordinate ADP. CDP contacts are provided by G339 and F344. The ADP site is built by F344, E345, D377, and S378. E345 provides a ligand contact to AMP. E345, D377, and S378 together coordinate ATP. Residue D377 coordinates Mg(2+).

It belongs to the phosphoglycerate kinase family. Monomer. It depends on Mg(2+) as a cofactor.

It localises to the cytoplasm. It carries out the reaction (2R)-3-phosphoglycerate + ATP = (2R)-3-phospho-glyceroyl phosphate + ADP. It participates in carbohydrate degradation; glycolysis; pyruvate from D-glyceraldehyde 3-phosphate: step 2/5. The chain is Phosphoglycerate kinase, cytosolic (C1PGK) from Trypanosoma congolense.